The following is a 288-amino-acid chain: Bifunctional protein FolD (288 aa).

NADP(+) contacts are provided by residues 166–168 (GAS) and I232.

Belongs to the tetrahydrofolate dehydrogenase/cyclohydrolase family. As to quaternary structure, homodimer.

It carries out the reaction (6R)-5,10-methylene-5,6,7,8-tetrahydrofolate + NADP(+) = (6R)-5,10-methenyltetrahydrofolate + NADPH. It catalyses the reaction (6R)-5,10-methenyltetrahydrofolate + H2O = (6R)-10-formyltetrahydrofolate + H(+). The protein operates within one-carbon metabolism; tetrahydrofolate interconversion. Functionally, catalyzes the oxidation of 5,10-methylenetetrahydrofolate to 5,10-methenyltetrahydrofolate and then the hydrolysis of 5,10-methenyltetrahydrofolate to 10-formyltetrahydrofolate. In Citrobacter koseri (strain ATCC BAA-895 / CDC 4225-83 / SGSC4696), this protein is Bifunctional protein FolD.